The primary structure comprises 301 residues: tRNA dimethylallyltransferase (301 aa).

5–12 is an ATP binding site; it reads GPTASGKS. 7-12 contacts substrate; it reads TASGKS. Residues 30 to 33 are interaction with substrate tRNA; that stretch reads DSMQ.

It belongs to the IPP transferase family. In terms of assembly, monomer. Requires Mg(2+) as cofactor.

The enzyme catalyses adenosine(37) in tRNA + dimethylallyl diphosphate = N(6)-dimethylallyladenosine(37) in tRNA + diphosphate. Its function is as follows. Catalyzes the transfer of a dimethylallyl group onto the adenine at position 37 in tRNAs that read codons beginning with uridine, leading to the formation of N6-(dimethylallyl)adenosine (i(6)A). This is tRNA dimethylallyltransferase from Rhodopseudomonas palustris (strain TIE-1).